The primary structure comprises 309 residues: Homoserine kinase (309 aa).

91–101 (PIGSGLGSSAC) serves as a coordination point for ATP.

This sequence belongs to the GHMP kinase family. Homoserine kinase subfamily.

The protein resides in the cytoplasm. The catalysed reaction is L-homoserine + ATP = O-phospho-L-homoserine + ADP + H(+). It functions in the pathway amino-acid biosynthesis; L-threonine biosynthesis; L-threonine from L-aspartate: step 4/5. Functionally, catalyzes the ATP-dependent phosphorylation of L-homoserine to L-homoserine phosphate. The polypeptide is Homoserine kinase (Buchnera aphidicola subsp. Schizaphis graminum (strain Sg)).